A 262-amino-acid chain; its full sequence is uncharacterized protein (262 aa).

Residues His-7, His-9, Glu-98, His-138, His-162, and Asp-212 each coordinate a divalent metal cation.

It belongs to the metallo-dependent hydrolases superfamily. TatD-type hydrolase family. A divalent metal cation is required as a cofactor.

This is an uncharacterized protein from Haemophilus influenzae (strain ATCC 51907 / DSM 11121 / KW20 / Rd).